Here is a 930-residue protein sequence, read N- to C-terminus: Isoleucine--tRNA ligase (930 aa).

A 'HIGH' region motif is present at residues 57-67 (PYANGNIHVGH). Glu554 contributes to the L-isoleucyl-5'-AMP binding site. The 'KMSKS' region signature appears at 595–599 (KMSKS). Lys598 serves as a coordination point for ATP. Zn(2+) contacts are provided by Cys888, Cys891, Cys908, and Cys911.

Belongs to the class-I aminoacyl-tRNA synthetase family. IleS type 1 subfamily. In terms of assembly, monomer. It depends on Zn(2+) as a cofactor.

The protein resides in the cytoplasm. It carries out the reaction tRNA(Ile) + L-isoleucine + ATP = L-isoleucyl-tRNA(Ile) + AMP + diphosphate. Catalyzes the attachment of isoleucine to tRNA(Ile). As IleRS can inadvertently accommodate and process structurally similar amino acids such as valine, to avoid such errors it has two additional distinct tRNA(Ile)-dependent editing activities. One activity is designated as 'pretransfer' editing and involves the hydrolysis of activated Val-AMP. The other activity is designated 'posttransfer' editing and involves deacylation of mischarged Val-tRNA(Ile). The protein is Isoleucine--tRNA ligase of Streptococcus pneumoniae serotype 19F (strain G54).